Consider the following 688-residue polypeptide: PR domain zinc finger protein 8 (688 aa).

Residues 16-131 (KAVQQCLTDI…KDEELLVWYG (116 aa)) enclose the SET domain. Tyr-130 serves as a coordination point for S-adenosyl-L-methionine. The C2H2-type 1 zinc finger occupies 154-182 (YTCLECSQRFQFEFPYVAHLRFRCPKRLH). Disordered stretches follow at residues 184-309 (TDAN…GCKG) and 397-506 (EEAA…PARS). The span at 192 to 208 (QGGGLGTKDHGGGGGGK) shows a compositional bias: gly residues. Composition is skewed to low complexity over residues 209 to 219 (EQQQQQQQQQQ) and 275 to 284 (GSSSCVAAPG). Composition is skewed to gly residues over residues 414-424 (AGGGVAGGGSN) and 470-489 (LGGGGGAGTAGTAGGSGGGQ). 2 consecutive C2H2-type zinc fingers follow at residues 624-647 (NWCAKCNASFRMTSDLVYHMRSHH) and 665-687 (LKCPICNESFRERHHLSRHMTSH).

It belongs to the class V-like SAM-binding methyltransferase superfamily. In terms of assembly, interacts with BHLHE22. Interacts with EPM2A and NHLRC1. This interaction sequesters EPM2A and NHLRC1 to the nucleus. Expressed in brain, heart, liver, testes, retina. Highest expression is observed in the retina and hippocampus; moderately expressed in the cortex and cerebellum. In the retina, it is expressed in bipolar and amacrine cells.

It is found in the nucleus. In terms of biological role, probable histone methyltransferase, preferentially acting on 'Lys-9' of histone H3. Histone methyltransferase activity has not been confirmed in other species. Involved in the control of steroidogenesis through transcriptional repression of steroidogenesis marker genes such as CYP17A1 and LHCGR. Forms with BHLHE22 a transcriptional repressor complex controlling genes involved in neural development and neuronal differentiation. In the retina, it is required for rod bipolar and type 2 OFF-cone bipolar cell survival. This Mus musculus (Mouse) protein is PR domain zinc finger protein 8 (Prdm8).